Reading from the N-terminus, the 471-residue chain is E3 ubiquitin-protein ligase TRIM38 (471 aa).

Residues 16-62 (CSICKAMMSHPVSINCGHSYCKSCIQSYYCNVSPKTGWKMLGCPLCS) form an RING-type zinc finger. The B box-type zinc-finger motif lies at 90-131 (DQDMVCEEHEEKFNRFCEDDGQLLCWRCYWEDRHKGHTLAHV). 4 residues coordinate Zn(2+): Cys-95, His-98, Cys-117, and His-123. One can recognise a B30.2/SPRY domain in the interval 276 to 471 (CNVSELYFDV…PLFLPAINNQ (196 aa)).

In terms of assembly, interacts (via B30.2/SPRY domain) with TAB2 and TAB3.

It localises to the cytoplasm. The catalysed reaction is S-ubiquitinyl-[E2 ubiquitin-conjugating enzyme]-L-cysteine + [acceptor protein]-L-lysine = [E2 ubiquitin-conjugating enzyme]-L-cysteine + N(6)-ubiquitinyl-[acceptor protein]-L-lysine.. The protein operates within protein modification; protein ubiquitination. It participates in protein modification; protein sumoylation. Its function is as follows. E3 ubiquitin-protein and E3 SUMO-protein ligase that acts as a regulator of innate immunity. Acts as a negative regulator of type I interferon IFN-beta production by catalyzing 'Lys-48'-linked polyubiquitination of AZI2/NAP1, leading to its degradation. Mediates 'Lys-48'-linked polyubiquitination and proteasomal degradation of the critical TLR adapter TICAM1, inhibiting TLR3-mediated type I interferon signaling. Acts as a positive regulator of the cGAS-STING pathway by acting as a E3 SUMO-protein ligase: mediates sumoylation of CGAS and STING, preventing their degradation and thereby activating the innate immune response to DNA virus. Also acts as a negative regulator of NF-kappa-B signaling independently of its E3 protein ligase activity by promoting lysosome-dependent degradation of TAB2 and TAB3 adapters. The chain is E3 ubiquitin-protein ligase TRIM38 from Mus musculus (Mouse).